Consider the following 624-residue polypeptide: ABC transporter G family member 23 (624 aa).

The ABC transporter domain maps to 52–296 (LTVTNLSYTI…IAKLGFQIPE (245 aa)). 84 to 91 (GPSGTGKS) contributes to the ATP binding site. Residues 350–560 (TEISYLCSRF…PLESMVVNEY (211 aa)) form the ABC transmembrane type-2 domain. 6 consecutive transmembrane segments (helical) span residues 369 to 389 (LFLA…SVYT), 402 to 422 (LGLF…ALPI), 450 to 470 (IAFV…VYWI), 480 to 500 (FSFF…LVLF), 511 to 531 (GNSL…YFIP), and 595 to 615 (INVG…WGIL).

Belongs to the ABC transporter superfamily. ABCG family. Eye pigment precursor importer (TC 3.A.1.204) subfamily.

Its subcellular location is the membrane. In Arabidopsis thaliana (Mouse-ear cress), this protein is ABC transporter G family member 23 (ABCG23).